The chain runs to 398 residues: Putative F-box protein At1g67450 (398 aa).

The F-box domain maps to 2-56; sequence TMMMSDLPNDLVEEILSRVPITSLGAVRSTCKRWNGLSKDRIVCKGDANQQFTGF.

The sequence is that of Putative F-box protein At1g67450 from Arabidopsis thaliana (Mouse-ear cress).